Here is a 465-residue protein sequence, read N- to C-terminus: 6-phospho-beta-glucosidase (465 aa).

The active-site Proton donor is the Glu173. Glu362 serves as the catalytic Nucleophile.

Belongs to the glycosyl hydrolase 1 family.

The enzyme catalyses 6-phospho-beta-D-glucosyl-(1-&gt;4)-D-glucose + H2O = D-glucose 6-phosphate + D-glucose. The protein operates within carbohydrate metabolism; beta-glucoside metabolism. This Dickeya chrysanthemi (Pectobacterium chrysanthemi) protein is 6-phospho-beta-glucosidase (arbB).